Here is a 113-residue protein sequence, read N- to C-terminus: Prefoldin subunit beta (113 aa).

The protein belongs to the prefoldin subunit beta family. As to quaternary structure, heterohexamer of two alpha and four beta subunits.

It localises to the cytoplasm. Its function is as follows. Molecular chaperone capable of stabilizing a range of proteins. Seems to fulfill an ATP-independent, HSP70-like function in archaeal de novo protein folding. The chain is Prefoldin subunit beta (pfdB) from Methanocaldococcus jannaschii (strain ATCC 43067 / DSM 2661 / JAL-1 / JCM 10045 / NBRC 100440) (Methanococcus jannaschii).